The primary structure comprises 1135 residues: Protocadherin-18 (1135 aa).

Residues 1–27 (MHQMNAKMHFRFVFALLIVSFNHDVLG) form the signal peptide. Cadherin domains follow at residues 28-137 (KNLK…SPQF), 138-246 (SRSL…SPAF), 247-354 (EQQS…KPEI), 361-465 (PGKE…PPHF), 466-576 (QRSR…VPVV), and 582-688 (RNNT…STAM). Over 28 to 699 (KNLKYRIYEE…SVSQASLDVS (672 aa)) the chain is Extracellular. Asn103 carries N-linked (GlcNAc...) asparagine glycosylation. N-linked (GlcNAc...) asparagine glycans are attached at residues Asn269, Asn420, Asn559, Asn583, and Asn641. A helical membrane pass occupies residues 700 to 720 (MIIIISLGAICAVLLVIMVLF). Residues 721 to 1135 (ATRCNREKKD…NKLLQDVRQS (415 aa)) lie on the Cytoplasmic side of the membrane. 4 disordered regions span residues 769–800 (LPIRSHHRSSPSSSPTLERGQMGSRQSHNSHQ), 869–889 (SLKDSGRGDSEAGDSDYDLGR), 942–1003 (DYRS…STSS), and 1023–1046 (YSECSEVDRSNSLERRKGPLPAKT). Over residues 791–800 (GSRQSHNSHQ) the composition is skewed to polar residues. A compositionally biased stretch (basic and acidic residues) spans 869–878 (SLKDSGRGDS). Residues 893 to 1135 (IDRLLGEGFS…NKLLQDVRQS (243 aa)) are interaction with DAB1. The segment covering 1028–1039 (EVDRSNSLERRK) has biased composition (basic and acidic residues).

Interacts with DAB1. In terms of tissue distribution, expressed in all tissues, with highest expression in lung and ovary.

Its subcellular location is the cell membrane. Potential calcium-dependent cell-adhesion protein. The polypeptide is Protocadherin-18 (PCDH18) (Homo sapiens (Human)).